The sequence spans 1160 residues: Transcription factor tau 138 kDa subunit (1160 aa).

The tract at residues 475–533 (PNSKKTPNKNKRKRQVKNSTNASVAGNISNPKRIKLEQHVSTAQEPKSAEDSPSSNGGT) is disordered. The segment covering 480–490 (TPNKNKRKRQV) has biased composition (basic residues). Composition is skewed to polar residues over residues 491-504 (KNST…NISN) and 513-529 (HVST…SPSS). Serine 546 carries the post-translational modification Phosphoserine.

As to quaternary structure, component of the TFIIIC complex composed of TFC1, TFC3, TFC4, TFC6, TFC7 and TFC8. The subunits are organized in two globular domains, tauA and tauB, connected by a proteolysis-sensitive and flexible linker. Interacts with TFC1, TFC4 and TFC6.

The protein resides in the nucleus. The protein localises to the mitochondrion. In terms of biological role, TFIIIC mediates tRNA and 5S RNA gene activation by binding to intragenic promoter elements. Upstream of the transcription start site, TFIIIC assembles the initiation complex TFIIIB-TFIIIC-tDNA, which is sufficient for RNA polymerase III recruitment and function. Part of the tauB domain of TFIIIC that binds boxB DNA promoter sites of tRNA and similar genes. TFC3 is essential for cell viability. Cooperates with TFC6 in DNA binding. The sequence is that of Transcription factor tau 138 kDa subunit (TFC3) from Saccharomyces cerevisiae (strain ATCC 204508 / S288c) (Baker's yeast).